We begin with the raw amino-acid sequence, 168 residues long: Scytalone dehydratase arp1 (168 aa).

Substrate is bound by residues Tyr29 and Tyr49. Active-site residues include His84 and His109. Asn130 provides a ligand contact to substrate.

The protein belongs to the scytalone dehydratase family. In terms of assembly, homotrimer. Each subunit contains an active site, located in the central part of the hydrophobic core of the monomer, which functions independently.

The protein localises to the endosome. The enzyme catalyses scytalone = 1,3,8-trihydroxynaphthalene + H2O. The protein operates within pigment biosynthesis; melanin biosynthesis. Fenoxanil inhibits arp1 scytalone dehydratase activity. Functionally, scytalone dehydratase; part of the gene cluster that mediates the biosynthesis of dihydroxynaphthalene (DHN)-melanin, a bluish-green pigment and a structural component of the conidial wall. The first step of the pathway is the production of the heptaketide naphtopyrone YWA1 by the polyketide synthase alb1 though condensation of acetyl-CoA with malonyl-CoA. The naphtopyrone YWA1 is then converted to the pentaketide 1,3,6,8-tetrahydroxynaphthalene (1,3,6,8-THN) by the heptaketide hydrolyase ayg1 though chain-length shortening. 1,3,6,8-THN is substrate of the hydroxynaphthalene reductase arp2 to yield scytalone. The scytalone dehydratase arp1 then reduces scytalone to 1,3,8-THN. 1,3,8-THN is also substrate of the hydroxynaphthalene reductase arp2 to yield vermelone. Vermelone is further converted by the multicopper oxidase abr1 to 1,8-DHN. Finally the laccase abr2 transforms 1,8-DHN to DHN-melanin. DHN-melanin biosynthesis appears to be initiated in endosomes where early enzymes (abl1, ayg1, arp1 and arp2) localize, with exocytosis leading to melanin deposition on the cell surface where late enzymes (abr1 and abr2) localize. DHN-melanin is an important structural component of the outer cell wall and is required for the presence of conidial surface hydrophobins. DHN-melanin also plays a crucial role in fungal virulence, including a protective role against the host's immune defenses. DHN-melanin also protects conidia against amoeba predation. In Aspergillus fumigatus (strain ATCC MYA-4609 / CBS 101355 / FGSC A1100 / Af293) (Neosartorya fumigata), this protein is Scytalone dehydratase arp1.